The following is a 209-amino-acid chain: Holliday junction branch migration complex subunit RuvA (209 aa).

Residues 1–64 (MIGRIRGMLI…EDAQSLYGFA (64 aa)) form a domain I region. Residues 65–143 (SRLDRNLFRL…QLEGQFVPSQ (79 aa)) are domain II. A flexible linker region spans residues 144-157 (PDVPTGAGAATASQ). The segment at 158 to 209 (AGPDPREEAEAALIALGYKPQEAAKAISKVAGPDMNSETLIRLALKNMIPAG) is domain III.

The protein belongs to the RuvA family. As to quaternary structure, homotetramer. Forms an RuvA(8)-RuvB(12)-Holliday junction (HJ) complex. HJ DNA is sandwiched between 2 RuvA tetramers; dsDNA enters through RuvA and exits via RuvB. An RuvB hexamer assembles on each DNA strand where it exits the tetramer. Each RuvB hexamer is contacted by two RuvA subunits (via domain III) on 2 adjacent RuvB subunits; this complex drives branch migration. In the full resolvosome a probable DNA-RuvA(4)-RuvB(12)-RuvC(2) complex forms which resolves the HJ.

The protein resides in the cytoplasm. The RuvA-RuvB-RuvC complex processes Holliday junction (HJ) DNA during genetic recombination and DNA repair, while the RuvA-RuvB complex plays an important role in the rescue of blocked DNA replication forks via replication fork reversal (RFR). RuvA specifically binds to HJ cruciform DNA, conferring on it an open structure. The RuvB hexamer acts as an ATP-dependent pump, pulling dsDNA into and through the RuvAB complex. HJ branch migration allows RuvC to scan DNA until it finds its consensus sequence, where it cleaves and resolves the cruciform DNA. The sequence is that of Holliday junction branch migration complex subunit RuvA from Marinobacter nauticus (strain ATCC 700491 / DSM 11845 / VT8) (Marinobacter aquaeolei).